The sequence spans 111 residues: Translation initiation factor 1A (111 aa).

The region spanning glycine 12–leucine 86 is the S1-like domain.

It belongs to the eIF-1A family.

Seems to be required for maximal rate of protein biosynthesis. Enhances ribosome dissociation into subunits and stabilizes the binding of the initiator Met-tRNA(I) to 40 S ribosomal subunits. The sequence is that of Translation initiation factor 1A (eIF1A) from Aeropyrum pernix (strain ATCC 700893 / DSM 11879 / JCM 9820 / NBRC 100138 / K1).